The chain runs to 496 residues: Matrilin-1 (496 aa).

A signal peptide spans 1–22 (MRVLSGTSLMLCSLLLLLQALC). Residues 23–222 (SPGLAPQSRG…SRKFQEAFCV (200 aa)) form the VWFA 1 domain. Asparagine 76 carries an N-linked (GlcNAc...) asparagine glycan. In terms of domain architecture, EGF-like spans 223–263 (VSDLCATGDHDCEQVCISSPGSYTCACHEGFTLNSDGKTCN). Disulfide bonds link cysteine 227–cysteine 238, cysteine 234–cysteine 247, and cysteine 249–cysteine 262. Residues 264–453 (VCSGGGGSSA…GKKLQKKICV (190 aa)) form the VWFA 2 domain. A glycan (N-linked (GalNAc...) asparagine) is linked at asparagine 344. Residues 467-495 (QAKVEGLLQALTRKLEAVSKRLAILENTV) adopt a coiled-coil conformation.

As to quaternary structure, homotrimer. Part of a complex composed of MATN1 (via VWFA1 domain), type 2 collagens and type 6 collagens. Forms a complex (via covalent bonds) with ACAN; the interaction increases in abundance with increasing age of the organism via an increase in occupancy of MATN1 binding sites. Interacts with COMP. Post-translationally, N-glycosylated; reduces binding affinity for type 2 collagens.

The protein localises to the secreted. It is found in the extracellular space. Its subcellular location is the extracellular matrix. A major component of the extracellular matrix of non-articular cartilage. Binds to type 2 collagens and forms long concatenated protein networks as part of the extracellular matrix. Required for the network-like organization and bundling of collagen fibrils surrounding chondrocytes in the zones of maturation and hypertrophy. Required for mechanotransduction and adaption to mechanical loading in cartilage chondrocytes, resulting in an increase in expression of the extracellular matrix components ACAN and COL2A1. Acts as a moderator of angiogenesis in response to injury. The protein is Matrilin-1 of Homo sapiens (Human).